A 91-amino-acid chain; its full sequence is Large ribosomal subunit protein eL31 (91 aa).

Belongs to the eukaryotic ribosomal protein eL31 family.

The sequence is that of Large ribosomal subunit protein eL31 from Pyrobaculum calidifontis (strain DSM 21063 / JCM 11548 / VA1).